A 287-amino-acid polypeptide reads, in one-letter code: Pantothenate synthetase (287 aa).

30 to 37 serves as a coordination point for ATP; that stretch reads MGNLHDGH. His37 acts as the Proton donor in catalysis. Residue Gln61 participates in (R)-pantoate binding. Beta-alanine is bound at residue Gln61. 148–151 contributes to the ATP binding site; that stretch reads GQKD. Gln154 contacts (R)-pantoate. Residues Ile177 and 185–188 contribute to the ATP site; that span reads LSSR.

This sequence belongs to the pantothenate synthetase family. In terms of assembly, homodimer.

The protein resides in the cytoplasm. It carries out the reaction (R)-pantoate + beta-alanine + ATP = (R)-pantothenate + AMP + diphosphate + H(+). The protein operates within cofactor biosynthesis; (R)-pantothenate biosynthesis; (R)-pantothenate from (R)-pantoate and beta-alanine: step 1/1. Functionally, catalyzes the condensation of pantoate with beta-alanine in an ATP-dependent reaction via a pantoyl-adenylate intermediate. The polypeptide is Pantothenate synthetase (Psychrobacter cryohalolentis (strain ATCC BAA-1226 / DSM 17306 / VKM B-2378 / K5)).